Here is a 4749-residue protein sequence, read N- to C-terminus: E3 ubiquitin-protein ligase MYCBP2 (4749 aa).

Disordered stretches follow at residues 87–127 (DRDQ…RSKS), 170–192 (AASK…SREP), and 609–628 (ASKG…KPYK). A compositionally biased stretch (basic residues) spans 100-124 (SRNKKILNKKKLKRKQKSKSKVKTR). Residues Ser127, Ser178, Ser181, and Ser183 each carry the phosphoserine modification. 5 RCC1 repeats span residues 600 to 655 (DGSV…VISK), 699 to 755 (NGEV…MMCP), 907 to 957 (KRDK…VLME), 958 to 1009 (NGDV…LLMD), and 1011 to 1066 (QVFT…LRID). The span at 899–910 (SHPAQLKHKRDK) shows a compositional bias: basic residues. Residues 899 to 928 (SHPAQLKHKRDKHKDGSGDRGEKDASKITT) form a disordered region. Over residues 911 to 924 (HKDGSGDRGEKDAS) the composition is skewed to basic and acidic residues. The PHR domain 1 stretch occupies residues 1235 to 1386 (NRFESHGGGW…GQIPQLLYRL (152 aa)). Position 1621 is a phosphoserine (Ser1621). The interval 1723–1881 (NRFTKTSQGR…GQIPQILYYR (159 aa)) is PHR domain 2. Cys1745 and Cys1860 are joined by a disulfide. Positions 2018 to 2544 (AVIESEHPYK…FNQHLGKSLL (527 aa)) are RAE1 binding. Disordered stretches follow at residues 2313–2336 (KKTS…SAAA) and 2780–3084 (QQRQ…KGDG). The stretch at 2331–2438 (SPSAAASSAD…IDAGLEVKVK (108 aa)) is one Filamin repeat. Residues 2780–2803 (QQRQLQSDRGTISTSSRPVSTSGK) are compositionally biased toward polar residues. Positions 2814–2832 (VKPDGHVSRTPADQKKPRG) are enriched in basic and acidic residues. A Phosphoserine modification is found at Ser2841. Residues 2847–2857 (DAAKLRSDSHS) are compositionally biased toward basic and acidic residues. Over residues 2858-2879 (RSLSPNHNTLQTLKSDGRTSSG) the composition is skewed to polar residues. Ser2859 and Ser2861 each carry phosphoserine. Low complexity-rich tracts occupy residues 2884–2894 (SPGPGSRSSSP) and 2904–2917 (SSPS…SSSP). 2 positions are modified to phosphoserine: Ser2905 and Ser2911. Positions 2918 to 2929 (QDKNLPQKSTAP) are enriched in polar residues. Positions 2932–2943 (TKLDPPRERSKS) are enriched in basic and acidic residues. A phosphoserine mark is found at Ser2941, Ser2943, and Ser2992. The segment covering 3008-3021 (CTSSTLKTNGVTDS) has biased composition (polar residues). Composition is skewed to basic and acidic residues over residues 3027–3037 (GDLKSVDEGSN) and 3047–3056 (PLKDEQEMRA). Ser3057 is modified (phosphoserine). A compositionally biased stretch (basic residues) spans 3060–3073 (ISRKCANRHTRPKK). Phosphoserine occurs at positions 3162, 3550, and 3577. The tract at residues 3677 to 3700 (VEAEEDEDEDNKSNKENAEQEKDT) is disordered. The span at 3687–3700 (NKSNKENAEQEKDT) shows a compositional bias: basic and acidic residues. The DOC domain maps to 3789 to 3967 (FSISVQSGFE…SVAQQRSCEA (179 aa)). A disordered region spans residues 3986–4007 (SGDAEPTPEQEEKALLSSPEGE). A Phosphothreonine modification is found at Thr3992. Phosphoserine occurs at positions 4002 and 4003. The Zn(2+) site is built by Cys4499, Cys4502, Cys4517, His4519, His4522, Cys4525, Cys4546, Cys4549, Cys4615, and Cys4618. The segment at 4499–4550 (CMICFTEALSAAPAIQLDCSHVFHLQCCRRVLENRWLGPRITFGFISCPICK) adopts an RING-type; atypical zinc-finger fold. Positions 4610–4747 (YAYYVCYKCR…LGCGVCRNAH (138 aa)) are tandem cysteine domain. The active site involves Cys4629. Zn(2+) contacts are provided by Cys4646, Cys4649, Cys4658, His4661, Cys4670, Cys4673, and Cys4674. Residue Cys4681 is part of the active site. Zn(2+)-binding residues include Cys4688, Cys4691, Cys4709, Cys4723, His4729, Cys4740, and Cys4743.

The protein belongs to the RING-Cys relay (RCR) family. In terms of assembly, interacts with MYC. Interacts with TSC2 (tuberin) when TSC2 is in complex with TSC1 (hamartin). Interacts with FBXO45. Interacts with RAE1. Interacts with CPNE1 (via VWFA domain) and CPNE4 (via VWFA domain). Interacts with (sumoylated) RANGAP1; interaction with sumoylated RANGAP1 inhibits E3 ubiquitin-protein ligase activity and promotes MYCBP2 translocation to the nucleus. Interacts with RAN. Interacts with ATP13A2; the interaction inhibits the ubiquitination of TSC2 by MYCBP2. Interacts with USP11. In terms of processing, autoubiquitinated. Expression is mostly restricted to the nervous system, including expression in motor and sensory axons. During postnatal development, expression is particularly strong in the cerebellum, hippocampus and retina. Lower levels of expression are observed throughout the cerebral cortex.

The protein resides in the nucleus. It localises to the cell projection. Its subcellular location is the axon. The protein localises to the cytoplasm. It is found in the cytoskeleton. It carries out the reaction [E2 ubiquitin-conjugating enzyme]-S-ubiquitinyl-L-cysteine + [acceptor protein]-L-threonine = [E2 ubiquitin-conjugating enzyme]-L-cysteine + [acceptor protein]-3-O-ubiquitinyl-L-threonine.. The protein operates within protein modification; protein ubiquitination. In terms of biological role, atypical E3 ubiquitin-protein ligase which specifically mediates ubiquitination of threonine and serine residues on target proteins, instead of ubiquitinating lysine residues. Shows esterification activity towards both threonine and serine, with a preference for threonine, and acts via two essential catalytic cysteine residues that relay ubiquitin to its substrate via thioester intermediates. Interacts with the E2 enzymes UBE2D1, UBE2D3, UBE2E1 and UBE2L3. Plays a key role in neural development, probably by mediating ubiquitination of threonine residues on target proteins. Involved in different processes such as regulation of neurite outgrowth, synaptic growth, synaptogenesis and axon degeneration. Required for the formation of major central nervous system axon tracts. Required for proper axon growth by regulating axon navigation and axon branching: acts by regulating the subcellular location and stability of MAP3K12/DLK. Required for proper localization of retinogeniculate projections but not for eye-specific segregation. Regulates axon guidance in the olfactory system. Involved in Wallerian axon degeneration, an evolutionarily conserved process that drives the loss of damaged axons: acts by promoting destabilization of NMNAT2, probably via ubiquitination of NMNAT2. Catalyzes ubiquitination of threonine and/or serine residues on NMNAT2, consequences of threonine and/or serine ubiquitination are however unknown. Regulates the internalization of TRPV1 in peripheral sensory neurons. May mediate ubiquitination and subsequent proteasomal degradation of TSC2/tuberin. Independently of the E3 ubiquitin-protein ligase activity, also acts as a guanosine exchange factor (GEF) for RAN in neurons of dorsal root ganglia. May function as a facilitator or regulator of transcriptional activation by MYC. Acts in concert with HUWE1 to regulate the circadian clock gene expression by promoting the lithium-induced ubiquination and degradation of NR1D1. The sequence is that of E3 ubiquitin-protein ligase MYCBP2 from Mus musculus (Mouse).